The primary structure comprises 927 residues: Isoleucine--tRNA ligase (927 aa).

The short motif at 57-67 (PFANGNIHMGH) is the 'HIGH' region element. Glutamate 553 is a binding site for L-isoleucyl-5'-AMP. A 'KMSKS' region motif is present at residues 594–598 (KMSKS). Residue lysine 597 participates in ATP binding. Cysteine 886, cysteine 889, cysteine 906, and cysteine 909 together coordinate Zn(2+).

It belongs to the class-I aminoacyl-tRNA synthetase family. IleS type 1 subfamily. As to quaternary structure, monomer. The cofactor is Zn(2+).

The protein resides in the cytoplasm. The enzyme catalyses tRNA(Ile) + L-isoleucine + ATP = L-isoleucyl-tRNA(Ile) + AMP + diphosphate. In terms of biological role, catalyzes the attachment of isoleucine to tRNA(Ile). As IleRS can inadvertently accommodate and process structurally similar amino acids such as valine, to avoid such errors it has two additional distinct tRNA(Ile)-dependent editing activities. One activity is designated as 'pretransfer' editing and involves the hydrolysis of activated Val-AMP. The other activity is designated 'posttransfer' editing and involves deacylation of mischarged Val-tRNA(Ile). The sequence is that of Isoleucine--tRNA ligase from Lactobacillus acidophilus (strain ATCC 700396 / NCK56 / N2 / NCFM).